A 247-amino-acid polypeptide reads, in one-letter code: MLALRSGLRTALAPRVLTPQVCSPFATGPRQSNGTFYEFRTYFLKPSKTNEFLENFKNSVHLRTAHSEMIGYWTVEFGGRTNRVFHIWKYDNFAHRTAVRKALAKDKEWQERFLIPNLAFIDKQEVEITYLVPWCKIGTPPKEGVYELATFQMKPGGPALWGNAFKRAVNAHVELGYSTLVGVFHTEYGALNRVHVLWWNESADSRAAGRHWSHEDPRVVAAVRESVSYLESQQNTFLIPTSFSPLK.

K45, K48, K57, and K166 each carry N6-succinyllysine.

This sequence belongs to the NipSnap family.

It is found in the cytoplasm. It localises to the cytosol. The sequence is that of Protein NipSnap homolog 3B (Nipsnap3b) from Mus musculus (Mouse).